We begin with the raw amino-acid sequence, 78 residues long: RNA-binding protein Hfq (78 aa).

The region spanning Asp-10 to Val-69 is the Sm domain.

Belongs to the Hfq family. In terms of assembly, homohexamer.

RNA chaperone that binds small regulatory RNA (sRNAs) and mRNAs to facilitate mRNA translational regulation in response to envelope stress, environmental stress and changes in metabolite concentrations. Also binds with high specificity to tRNAs. In Bordetella avium (strain 197N), this protein is RNA-binding protein Hfq.